The primary structure comprises 243 residues: 1-(5-phosphoribosyl)-5-[(5-phosphoribosylamino)methylideneamino] imidazole-4-carboxamide isomerase (243 aa).

Asp8 acts as the Proton acceptor in catalysis. The active-site Proton donor is Asp130.

It belongs to the HisA/HisF family.

It is found in the cytoplasm. The catalysed reaction is 1-(5-phospho-beta-D-ribosyl)-5-[(5-phospho-beta-D-ribosylamino)methylideneamino]imidazole-4-carboxamide = 5-[(5-phospho-1-deoxy-D-ribulos-1-ylimino)methylamino]-1-(5-phospho-beta-D-ribosyl)imidazole-4-carboxamide. It functions in the pathway amino-acid biosynthesis; L-histidine biosynthesis; L-histidine from 5-phospho-alpha-D-ribose 1-diphosphate: step 4/9. This Vesicomyosocius okutanii subsp. Calyptogena okutanii (strain HA) protein is 1-(5-phosphoribosyl)-5-[(5-phosphoribosylamino)methylideneamino] imidazole-4-carboxamide isomerase.